The sequence spans 36 residues: Conotoxin Cl14.10 (36 aa).

A propeptide spanning residues 1–2 (NE) is cleaved from the precursor.

Contains 2 disulfide bond. In terms of tissue distribution, expressed by the venom duct.

Its subcellular location is the secreted. This is Conotoxin Cl14.10 from Californiconus californicus (California cone).